We begin with the raw amino-acid sequence, 442 residues long: 23S rRNA (uracil(1939)-C(5))-methyltransferase RlmD (442 aa).

The TRAM domain occupies Ser-12–Lys-70. 4 residues coordinate [4Fe-4S] cluster: Cys-83, Cys-89, Cys-92, and Cys-171. S-adenosyl-L-methionine contacts are provided by Gln-276, Phe-305, Asn-310, Glu-326, Asp-353, and Asp-373. Cys-399 serves as the catalytic Nucleophile.

It belongs to the class I-like SAM-binding methyltransferase superfamily. RNA M5U methyltransferase family. RlmD subfamily.

It catalyses the reaction uridine(1939) in 23S rRNA + S-adenosyl-L-methionine = 5-methyluridine(1939) in 23S rRNA + S-adenosyl-L-homocysteine + H(+). In terms of biological role, catalyzes the formation of 5-methyl-uridine at position 1939 (m5U1939) in 23S rRNA. In Shewanella sediminis (strain HAW-EB3), this protein is 23S rRNA (uracil(1939)-C(5))-methyltransferase RlmD.